A 141-amino-acid polypeptide reads, in one-letter code: Endoribonuclease YbeY (141 aa).

Positions 105, 109, and 115 each coordinate Zn(2+).

The protein belongs to the endoribonuclease YbeY family. Requires Zn(2+) as cofactor.

It is found in the cytoplasm. Functionally, single strand-specific metallo-endoribonuclease involved in late-stage 70S ribosome quality control and in maturation of the 3' terminus of the 16S rRNA. The chain is Endoribonuclease YbeY from Chlorobaculum parvum (strain DSM 263 / NCIMB 8327) (Chlorobium vibrioforme subsp. thiosulfatophilum).